The following is a 95-amino-acid chain: Large ribosomal subunit protein bL25 (95 aa).

It belongs to the bacterial ribosomal protein bL25 family. In terms of assembly, part of the 50S ribosomal subunit; part of the 5S rRNA/L5/L18/L25 subcomplex. Contacts the 5S rRNA. Binds to the 5S rRNA independently of L5 and L18.

In terms of biological role, this is one of the proteins that binds to the 5S RNA in the ribosome where it forms part of the central protuberance. The polypeptide is Large ribosomal subunit protein bL25 (Haemophilus influenzae (strain PittGG)).